Here is a 337-residue protein sequence, read N- to C-terminus: UDP-N-acetylenolpyruvoylglucosamine reductase (337 aa).

Residues 17–186 (IEAKAKQFIA…TSVIYKLTKR (170 aa)) form the FAD-binding PCMH-type domain. Residue Arg162 is part of the active site. Ser237 (proton donor) is an active-site residue. Glu333 is an active-site residue.

Belongs to the MurB family. Requires FAD as cofactor.

It is found in the cytoplasm. It carries out the reaction UDP-N-acetyl-alpha-D-muramate + NADP(+) = UDP-N-acetyl-3-O-(1-carboxyvinyl)-alpha-D-glucosamine + NADPH + H(+). Its pathway is cell wall biogenesis; peptidoglycan biosynthesis. In terms of biological role, cell wall formation. In Flavobacterium johnsoniae (strain ATCC 17061 / DSM 2064 / JCM 8514 / BCRC 14874 / CCUG 350202 / NBRC 14942 / NCIMB 11054 / UW101) (Cytophaga johnsonae), this protein is UDP-N-acetylenolpyruvoylglucosamine reductase.